We begin with the raw amino-acid sequence, 114 residues long: Type 4 adapter protein IcmS (114 aa).

As to quaternary structure, the T4BSS is a complex nanomachine composed of several subcomplexes. This subunit is part of the Type IV Coupling Complex (T4CC), a subcomplex composed of the DotLMNYZ core and the IcmSW-LvgA adapter subunits, linked by the C-terminal tail of DotL. Interacts with IcmW. IcmS and IcmW form a stable complex. Interacts directly with the type 4 coupling protein DotL. Interacts with LvgA. Interacts with effector proteins.

The protein localises to the cytoplasm. Its activity is regulated as follows. Interaction with DotL is critical for the export of IcmSW-dependent substrates. Component of the Dot/Icm type IVB secretion system (T4BSS), which is used to inject bacterial effector proteins into eukaryotic host cells. Part of a subcomplex which recruits effector proteins and delivers them to the core transmembrane subcomplex. The IcmS/IcmW protein complex plays an important role in protein translocation by interacting with multiple Dot/Icm effector proteins to facilitate their translocation into host cells. Interaction promotes conformational changes in the effector protein, which may facilitate display of a C-terminal translocation signal. May maintain the substrates in a translocation competent form. Required for intracellular growth in host cells, replicative phagosome formation and phagosome trafficking. IcmS is required for IcmW stability. This chain is Type 4 adapter protein IcmS, found in Legionella pneumophila subsp. pneumophila (strain Philadelphia 1 / ATCC 33152 / DSM 7513).